An 81-amino-acid polypeptide reads, in one-letter code: Photosystem I iron-sulfur center (81 aa).

4Fe-4S ferredoxin-type domains follow at residues serine 2–tryptophan 31 and isoleucine 39–tyrosine 68. Positions 11, 14, 17, 21, 48, 51, 54, and 58 each coordinate [4Fe-4S] cluster.

In terms of assembly, the cyanobacterial PSI reaction center is composed of one copy each of PsaA,B,C,D,E,F,I,J,K,L,M and X, and forms trimeric complexes. Requires [4Fe-4S] cluster as cofactor.

The protein resides in the cellular thylakoid membrane. The catalysed reaction is reduced [plastocyanin] + hnu + oxidized [2Fe-2S]-[ferredoxin] = oxidized [plastocyanin] + reduced [2Fe-2S]-[ferredoxin]. Its function is as follows. Apoprotein for the two 4Fe-4S centers FA and FB of photosystem I (PSI); essential for photochemical activity. FB is the terminal electron acceptor of PSI, donating electrons to ferredoxin. The C-terminus interacts with PsaA/B/D and helps assemble the protein into the PSI complex. Required for binding of PsaD and PsaE to PSI. PSI is a plastocyanin/cytochrome c6-ferredoxin oxidoreductase, converting photonic excitation into a charge separation, which transfers an electron from the donor P700 chlorophyll pair to the spectroscopically characterized acceptors A0, A1, FX, FA and FB in turn. The protein is Photosystem I iron-sulfur center of Mastigocladus laminosus (Fischerella sp.).